The chain runs to 65 residues: Potassium channel toxin kappa-KTx 2.7 (65 aa).

The N-terminal stretch at 1–26 (MKTSGTVYVFLLLLAFGIFTDISSAC) is a signal peptide. Residues 27-39 (SEQMDDEDSYEVE) constitute a propeptide that is removed on maturation. Disulfide bonds link Cys45–Cys63 and Cys49–Cys59.

Belongs to the short scorpion toxin superfamily. Potassium channel inhibitor kappa-KTx family. Kappa-KTx 2 subfamily. In terms of tissue distribution, expressed by the venom gland.

It is found in the secreted. Weakly inhibits the Kv7.1/KCNQ1 channel (10 uM of the toxin inhibits currents by 17.8%). The chain is Potassium channel toxin kappa-KTx 2.7 from Heterometrus petersii (Asian forest scorpion).